The primary structure comprises 382 residues: Queuine tRNA-ribosyltransferase (382 aa).

Asp-93 functions as the Proton acceptor in the catalytic mechanism. Substrate is bound by residues 93 to 97 (DSGGF), Asp-147, Gln-191, and Gly-218. The interval 249 to 255 (GVGKPED) is RNA binding. Residue Asp-268 is the Nucleophile of the active site. The tract at residues 273-277 (TRNAR) is RNA binding; important for wobble base 34 recognition. The Zn(2+) site is built by Cys-306, Cys-308, Cys-311, and His-337.

This sequence belongs to the queuine tRNA-ribosyltransferase family. In terms of assembly, homodimer. Within each dimer, one monomer is responsible for RNA recognition and catalysis, while the other monomer binds to the replacement base PreQ1. Zn(2+) is required as a cofactor.

It carries out the reaction 7-aminomethyl-7-carbaguanine + guanosine(34) in tRNA = 7-aminomethyl-7-carbaguanosine(34) in tRNA + guanine. It functions in the pathway tRNA modification; tRNA-queuosine biosynthesis. In terms of biological role, catalyzes the base-exchange of a guanine (G) residue with the queuine precursor 7-aminomethyl-7-deazaguanine (PreQ1) at position 34 (anticodon wobble position) in tRNAs with GU(N) anticodons (tRNA-Asp, -Asn, -His and -Tyr). Catalysis occurs through a double-displacement mechanism. The nucleophile active site attacks the C1' of nucleotide 34 to detach the guanine base from the RNA, forming a covalent enzyme-RNA intermediate. The proton acceptor active site deprotonates the incoming PreQ1, allowing a nucleophilic attack on the C1' of the ribose to form the product. After dissociation, two additional enzymatic reactions on the tRNA convert PreQ1 to queuine (Q), resulting in the hypermodified nucleoside queuosine (7-(((4,5-cis-dihydroxy-2-cyclopenten-1-yl)amino)methyl)-7-deazaguanosine). The sequence is that of Queuine tRNA-ribosyltransferase from Actinobacillus pleuropneumoniae serotype 5b (strain L20).